A 357-amino-acid polypeptide reads, in one-letter code: Probable cinnamyl alcohol dehydrogenase 2 (357 aa).

Cys47 lines the Zn(2+) pocket. Ser49 is a binding site for NADP(+). Zn(2+) is bound by residues His69, Glu70, Cys100, Cys103, Cys106, Cys114, and Cys163. Residues Thr167, 188 to 193 (GLGGVG), 211 to 216 (SSSNKK), Thr251, Gly275, and 298 to 300 (SFI) contribute to the NADP(+) site.

This sequence belongs to the zinc-containing alcohol dehydrogenase family. In terms of assembly, homodimer. Zn(2+) serves as cofactor. In terms of processing, the N-terminus is blocked.

The catalysed reaction is (E)-cinnamyl alcohol + NADP(+) = (E)-cinnamaldehyde + NADPH + H(+). The enzyme catalyses (E)-coniferol + NADP(+) = (E)-coniferaldehyde + NADPH + H(+). It carries out the reaction (E)-sinapyl alcohol + NADP(+) = (E)-sinapaldehyde + NADPH + H(+). It catalyses the reaction (E)-4-coumaroyl alcohol + NADP(+) = (E)-4-coumaraldehyde + NADPH + H(+). The catalysed reaction is (E)-caffeyl alcohol + NADP(+) = (E)-caffeyl aldehyde + NADPH + H(+). The protein operates within aromatic compound metabolism; phenylpropanoid biosynthesis. Involved in lignin biosynthesis. Catalyzes the final step specific for the production of lignin monomers. Catalyzes the NADPH-dependent reduction of coniferaldehyde, 5-hydroxyconiferaldehyde, sinapaldehyde, 4-coumaraldehyde and caffeyl aldehyde to their respective alcohols. This Nicotiana tabacum (Common tobacco) protein is Probable cinnamyl alcohol dehydrogenase 2 (CAD19).